Here is a 147-residue protein sequence, read N- to C-terminus: UPF0178 protein VP2328 (147 aa).

It belongs to the UPF0178 family.

The sequence is that of UPF0178 protein VP2328 from Vibrio parahaemolyticus serotype O3:K6 (strain RIMD 2210633).